The primary structure comprises 482 residues: Aspartyl/glutamyl-tRNA(Asn/Gln) amidotransferase subunit B (482 aa).

The protein belongs to the GatB/GatE family. GatB subfamily. As to quaternary structure, heterotrimer of A, B and C subunits.

It catalyses the reaction L-glutamyl-tRNA(Gln) + L-glutamine + ATP + H2O = L-glutaminyl-tRNA(Gln) + L-glutamate + ADP + phosphate + H(+). The enzyme catalyses L-aspartyl-tRNA(Asn) + L-glutamine + ATP + H2O = L-asparaginyl-tRNA(Asn) + L-glutamate + ADP + phosphate + 2 H(+). In terms of biological role, allows the formation of correctly charged Asn-tRNA(Asn) or Gln-tRNA(Gln) through the transamidation of misacylated Asp-tRNA(Asn) or Glu-tRNA(Gln) in organisms which lack either or both of asparaginyl-tRNA or glutaminyl-tRNA synthetases. The reaction takes place in the presence of glutamine and ATP through an activated phospho-Asp-tRNA(Asn) or phospho-Glu-tRNA(Gln). The sequence is that of Aspartyl/glutamyl-tRNA(Asn/Gln) amidotransferase subunit B from Thermotoga sp. (strain RQ2).